Reading from the N-terminus, the 448-residue chain is Probable glycine dehydrogenase (decarboxylating) subunit 1 (448 aa).

It belongs to the GcvP family. N-terminal subunit subfamily. As to quaternary structure, the glycine cleavage system is composed of four proteins: P, T, L and H. In this organism, the P 'protein' is a heterodimer of two subunits.

It catalyses the reaction N(6)-[(R)-lipoyl]-L-lysyl-[glycine-cleavage complex H protein] + glycine + H(+) = N(6)-[(R)-S(8)-aminomethyldihydrolipoyl]-L-lysyl-[glycine-cleavage complex H protein] + CO2. In terms of biological role, the glycine cleavage system catalyzes the degradation of glycine. The P protein binds the alpha-amino group of glycine through its pyridoxal phosphate cofactor; CO(2) is released and the remaining methylamine moiety is then transferred to the lipoamide cofactor of the H protein. In Listeria welshimeri serovar 6b (strain ATCC 35897 / DSM 20650 / CCUG 15529 / CIP 8149 / NCTC 11857 / SLCC 5334 / V8), this protein is Probable glycine dehydrogenase (decarboxylating) subunit 1.